The chain runs to 313 residues: Porphobilinogen deaminase (313 aa).

Cys242 is modified (S-(dipyrrolylmethanemethyl)cysteine).

It belongs to the HMBS family. As to quaternary structure, monomer. Requires dipyrromethane as cofactor.

The enzyme catalyses 4 porphobilinogen + H2O = hydroxymethylbilane + 4 NH4(+). It functions in the pathway porphyrin-containing compound metabolism; protoporphyrin-IX biosynthesis; coproporphyrinogen-III from 5-aminolevulinate: step 2/4. Functionally, tetrapolymerization of the monopyrrole PBG into the hydroxymethylbilane pre-uroporphyrinogen in several discrete steps. This is Porphobilinogen deaminase from Yersinia pseudotuberculosis serotype IB (strain PB1/+).